Consider the following 544-residue polypeptide: POTE ankyrin domain family member B2 (544 aa).

ANK repeat units follow at residues 135–167, 168–200, 201–233, 234–266, and 267–299; these read QKRT…VLDN, KKRT…IQDE, YGNT…SKNK, CGLT…ALDR, and YGRT…SQDL. Positions 332 to 457 are disordered; the sequence is SSENSNPEQD…NTGISQDEIL (126 aa). Composition is skewed to basic and acidic residues over residues 340-355 and 364-375; these read QDLK…RLKV and MSQEPEINKDCD. The span at 439-457 shows a compositional bias: polar residues; it reads TQKQLSEEQNTGISQDEIL.

This sequence belongs to the POTE family.

This Homo sapiens (Human) protein is POTE ankyrin domain family member B2 (POTEB2).